Reading from the N-terminus, the 160-residue chain is DNA polymerase delta subunit 4 (160 aa).

The disordered stretch occupies residues 1 to 48 (MKKRTTQAKKSGQNTNIRDVFPHVVRSNSSQSHIGKKVSSEQSPTPDV). Over residues 8–17 (AKKSGQNTNI) the composition is skewed to polar residues.

This sequence belongs to the DNA polymerase delta subunit 4 family. As to quaternary structure, heterotetramer that consist of the pol3, cdc1, cdc27 and cdm1 subunits. Interacts with cdc1 and pol3.

It localises to the nucleus. Appears to have a role in the stabilization of the DNA polymerase delta complex. This Schizosaccharomyces pombe (strain 972 / ATCC 24843) (Fission yeast) protein is DNA polymerase delta subunit 4 (cdm1).